The following is a 306-amino-acid chain: MSTLGHQYDNSLVSNAFGFLRLPMNFQPYDSDADWVITGVPFDMATSGRAGGRHGPAAIRQVSTNLAWEHNRFPWNFDMRERLNVVDCGDLVYAFGDAREMSEKLQAHAEKLLAAGKRMLSFGGDHFVTLPLLRAHAKHFGKMALVHFDAHTDTYANGCEFDHGTMFYTAPKEGLIDPNHSVQIGIRTEFDKDNGFTVLDACQVNDRGVDDVIAQVKQIVGDMPVYLTFDIDCLDPAFAPGTGTPVIGGLTSDRAIKLVRGLKDLNIVGMDVVEVAPAYDQSEITALAAATLALEMLYIQAAKKGE.

The Mn(2+) site is built by H126, D149, H151, D153, D230, and D232.

Belongs to the arginase family. Agmatinase subfamily. Requires Mn(2+) as cofactor.

It catalyses the reaction agmatine + H2O = urea + putrescine. It participates in amine and polyamine biosynthesis; putrescine biosynthesis via agmatine pathway; putrescine from agmatine: step 1/1. In terms of biological role, catalyzes the formation of putrescine from agmatine. The polypeptide is Agmatinase (Escherichia coli O7:K1 (strain IAI39 / ExPEC)).